We begin with the raw amino-acid sequence, 908 residues long: SH3 and PX domain-containing protein 2B (908 aa).

In terms of domain architecture, PX spans arginine 5–leucine 129. A Phosphotyrosine modification is found at tyrosine 25. SH3 domains lie at methionine 152–glycine 211 and glutamate 221–glycine 280. A phosphoserine mark is found at serine 279 and serine 291. Disordered regions lie at residues glycine 280–leucine 300 and glutamate 315–proline 366. The segment covering glutamate 315–glutamine 337 has biased composition (basic and acidic residues). A compositionally biased stretch (basic residues) spans arginine 338 to proline 347. The 60-residue stretch at glutamine 368–lysine 427 folds into the SH3 3 domain. The disordered stretch occupies residues threonine 455–glycine 832. Composition is skewed to basic and acidic residues over residues lysine 486–serine 499, glutamine 516–proline 546, leucine 569–lysine 584, cysteine 595–lysine 606, and serine 615–aspartate 625. 2 positions are modified to phosphoserine: serine 499 and serine 528. Position 661 is a phosphotyrosine (tyrosine 661). A compositionally biased stretch (basic and acidic residues) spans lysine 671 to histidine 684. Pro residues predominate over residues valine 754 to lysine 764. Position 840 is a phosphoserine (serine 840). Residues proline 847 to proline 908 enclose the SH3 4 domain.

Belongs to the SH3PXD2 family. As to quaternary structure, interacts with NOXO1. Interacts (via SH3 domains) with NOXA1; the interaction is direct. Interacts with ADAM15. Interacts with FASLG. Post-translationally, phosphorylated in SRC-transformed cells. In terms of tissue distribution, highly expressed in the stromal-vascular fraction of white adipose tissue with moderate expression in heart, skeletal muscle and the mature adipocyte fraction of white adipose tissue. Also expressed in brain, spleen, kidney and liver. Expressed in white and brown adipose tissues, eye, lung, heart, brain, spleen, stomach, liver and skeletal muscle (at protein level). Not expressed in kidney or bone marrow.

It is found in the cytoplasm. It localises to the cell projection. The protein resides in the podosome. In terms of biological role, adapter protein involved in invadopodia and podosome formation and extracellular matrix degradation. Binds matrix metalloproteinases (ADAMs), NADPH oxidases (NOXs) and phosphoinositides. Acts as an organizer protein that allows NOX1- or NOX3-dependent reactive oxygen species (ROS) generation and ROS localization. Plays a role in mitotic clonal expansion during the immediate early stage of adipocyte differentiation. The chain is SH3 and PX domain-containing protein 2B (Sh3pxd2b) from Mus musculus (Mouse).